A 223-amino-acid polypeptide reads, in one-letter code: Probable tRNA-splicing endonuclease subunit tsp-1 (223 aa).

The segment at 1–55 is disordered; it reads MESGSTPPTDKQIRENEQDGTGHQGKLLARPTSTRQQQQQQQQQPSHSVSQSVSQ. Low complexity predominate over residues 30–55; it reads RPTSTRQQQQQQQQQPSHSVSQSVSQ.

Belongs to the SEN15 family. As to quaternary structure, tRNA splicing endonuclease is a heterotetramer composed of tsp-2/sen2, tsp-1/sen15, tsp-4/sen34 and tsp-5/sen54. Interacts directly with tsp-4/sen34.

In terms of biological role, non-catalytic subunit of the tRNA-splicing endonuclease complex, a complex responsible for identification and cleavage of the splice sites in pre-tRNA. It cleaves pre-tRNA at the 5' and 3' splice sites to release the intron. The products are an intron and two tRNA half-molecules bearing 2',3' cyclic phosphate and 5'-OH termini. There are no conserved sequences at the splice sites, but the intron is invariably located at the same site in the gene, placing the splice sites an invariant distance from the constant structural features of the tRNA body. The sequence is that of Probable tRNA-splicing endonuclease subunit tsp-1 (tsp-1) from Neurospora crassa (strain ATCC 24698 / 74-OR23-1A / CBS 708.71 / DSM 1257 / FGSC 987).